Reading from the N-terminus, the 190-residue chain is Elongation factor P (190 aa).

It belongs to the elongation factor P family.

It is found in the cytoplasm. The protein operates within protein biosynthesis; polypeptide chain elongation. In terms of biological role, involved in peptide bond synthesis. Stimulates efficient translation and peptide-bond synthesis on native or reconstituted 70S ribosomes in vitro. Probably functions indirectly by altering the affinity of the ribosome for aminoacyl-tRNA, thus increasing their reactivity as acceptors for peptidyl transferase. The protein is Elongation factor P of Sulfurihydrogenibium sp. (strain YO3AOP1).